The chain runs to 1242 residues: ATP-dependent helicase/nuclease subunit A (1242 aa).

The UvrD-like helicase ATP-binding domain occupies 12-487; it reads SRWTDEQWKA…IDLASNFRSR (476 aa). An ATP-binding site is contributed by 33–40; sequence AAAGSGKT. Positions 514-808 constitute a UvrD-like helicase C-terminal domain; the sequence is AAQLKYGADY…RIMTIHSSKG (295 aa).

This sequence belongs to the helicase family. AddA subfamily. In terms of assembly, heterodimer of AddA and AddB/RexB. It depends on Mg(2+) as a cofactor.

The catalysed reaction is Couples ATP hydrolysis with the unwinding of duplex DNA by translocating in the 3'-5' direction.. It catalyses the reaction ATP + H2O = ADP + phosphate + H(+). Its function is as follows. The heterodimer acts as both an ATP-dependent DNA helicase and an ATP-dependent, dual-direction single-stranded exonuclease. Recognizes the chi site generating a DNA molecule suitable for the initiation of homologous recombination. The AddA nuclease domain is required for chi fragment generation; this subunit has the helicase and 3' -&gt; 5' nuclease activities. The polypeptide is ATP-dependent helicase/nuclease subunit A (Geobacillus kaustophilus (strain HTA426)).